A 470-amino-acid polypeptide reads, in one-letter code: Sulfate adenylyltransferase subunit 1 (470 aa).

The tr-type G domain occupies 22–238; the sequence is KELLRFITCG…ETIKIDYAYT (217 aa). The segment at 31 to 38 is G1; the sequence is GSVDDGKS. GTP is bound at residue 31–38; the sequence is GSVDDGKS. Residues 89–93 form a G2 region; the sequence is GITID. Positions 110 to 113 are G3; it reads DTPG. Residues 110–114 and 165–168 contribute to the GTP site; these read DTPGH and NKMD. The segment at 165-168 is G4; sequence NKMD. A G5 region spans residues 202–204; it reads SAL.

Belongs to the TRAFAC class translation factor GTPase superfamily. Classic translation factor GTPase family. CysN/NodQ subfamily. In terms of assembly, heterodimer composed of CysD, the smaller subunit, and CysN.

The catalysed reaction is sulfate + ATP + H(+) = adenosine 5'-phosphosulfate + diphosphate. The protein operates within sulfur metabolism; hydrogen sulfide biosynthesis; sulfite from sulfate: step 1/3. Its function is as follows. With CysD forms the ATP sulfurylase (ATPS) that catalyzes the adenylation of sulfate producing adenosine 5'-phosphosulfate (APS) and diphosphate, the first enzymatic step in sulfur assimilation pathway. APS synthesis involves the formation of a high-energy phosphoric-sulfuric acid anhydride bond driven by GTP hydrolysis by CysN coupled to ATP hydrolysis by CysD. The chain is Sulfate adenylyltransferase subunit 1 from Francisella tularensis subsp. tularensis (strain WY96-3418).